The sequence spans 415 residues: Serine hydroxymethyltransferase (415 aa).

(6S)-5,6,7,8-tetrahydrofolate-binding positions include Leu121 and 125–127; that span reads GHL. Residue Lys230 is modified to N6-(pyridoxal phosphate)lysine. Residue 355-357 participates in (6S)-5,6,7,8-tetrahydrofolate binding; the sequence is SPF.

This sequence belongs to the SHMT family. Homodimer. Pyridoxal 5'-phosphate serves as cofactor.

It is found in the cytoplasm. The catalysed reaction is (6R)-5,10-methylene-5,6,7,8-tetrahydrofolate + glycine + H2O = (6S)-5,6,7,8-tetrahydrofolate + L-serine. The protein operates within one-carbon metabolism; tetrahydrofolate interconversion. Its pathway is amino-acid biosynthesis; glycine biosynthesis; glycine from L-serine: step 1/1. In terms of biological role, catalyzes the reversible interconversion of serine and glycine with tetrahydrofolate (THF) serving as the one-carbon carrier. This reaction serves as the major source of one-carbon groups required for the biosynthesis of purines, thymidylate, methionine, and other important biomolecules. Also exhibits THF-independent aldolase activity toward beta-hydroxyamino acids, producing glycine and aldehydes, via a retro-aldol mechanism. The protein is Serine hydroxymethyltransferase of Lactococcus lactis subsp. cremoris (strain MG1363).